Consider the following 208-residue polypeptide: Small ribosomal subunit protein uS4 (208 aa).

The region spanning 98–161 (RRLDNVVYRL…RKSKRFKEVF (64 aa)) is the S4 RNA-binding domain.

This sequence belongs to the universal ribosomal protein uS4 family. Part of the 30S ribosomal subunit. Contacts protein S5. The interaction surface between S4 and S5 is involved in control of translational fidelity.

One of the primary rRNA binding proteins, it binds directly to 16S rRNA where it nucleates assembly of the body of the 30S subunit. In terms of biological role, with S5 and S12 plays an important role in translational accuracy. The protein is Small ribosomal subunit protein uS4 of Halothermothrix orenii (strain H 168 / OCM 544 / DSM 9562).